The sequence spans 130 residues: Small ribosomal subunit protein uS11 (130 aa).

This sequence belongs to the universal ribosomal protein uS11 family. In terms of assembly, part of the 30S ribosomal subunit. Interacts with proteins S7 and S18. Binds to IF-3.

Located on the platform of the 30S subunit, it bridges several disparate RNA helices of the 16S rRNA. Forms part of the Shine-Dalgarno cleft in the 70S ribosome. The polypeptide is Small ribosomal subunit protein uS11 (Shewanella baltica (strain OS223)).